A 437-amino-acid polypeptide reads, in one-letter code: Putative ankyrin repeat protein FPV014 (437 aa).

7 ANK repeats span residues 32-61, 65-94, 99-128, 131-160, 164-195, 197-226, and 230-259; these read YGCS…NPDL, STPT…DPDN, ESRT…DAED, RFNC…RINS, GSVY…DVED, LSFS…SVDV, and CGRT…DTSV.

The sequence is that of Putative ankyrin repeat protein FPV014 from Fowlpox virus (strain NVSL) (FPV).